The following is a 296-amino-acid chain: Pyridoxine/pyridoxal/pyridoxamine kinase (296 aa).

Residues Ser23 and His59 each contribute to the substrate site. ATP is bound at residue Asp125. Residue Tyr136 coordinates Mg(2+). ATP-binding positions include Thr157, Glu162, Thr195, 222–225, and Thr232; that span reads HQRV. Glu162 is a Mg(2+) binding site. Asp234 lines the substrate pocket.

Belongs to the pyridoxine kinase family. PdxK subfamily. In terms of assembly, homodimer. Mg(2+) is required as a cofactor.

It carries out the reaction pyridoxal + ATP = pyridoxal 5'-phosphate + ADP + H(+). It catalyses the reaction pyridoxine + ATP = pyridoxine 5'-phosphate + ADP + H(+). The catalysed reaction is pyridoxamine + ATP = pyridoxamine 5'-phosphate + ADP + H(+). Its pathway is cofactor metabolism; pyridoxal 5'-phosphate salvage; pyridoxal 5'-phosphate from pyridoxal: step 1/1. It participates in cofactor metabolism; pyridoxal 5'-phosphate salvage; pyridoxine 5'-phosphate from pyridoxine: step 1/1. The protein operates within cofactor metabolism; pyridoxal 5'-phosphate salvage; pyridoxamine 5'-phosphate from pyridoxamine: step 1/1. Functionally, B6-vitamer kinase involved in the salvage pathway of pyridoxal 5'-phosphate (PLP). Catalyzes the phosphorylation of pyridoxine (PN), pyridoxal (PL), and pyridoxamine (PM), forming their respective 5'-phosphorylated esters, i.e. PNP, PLP and PMP. In Bordetella avium (strain 197N), this protein is Pyridoxine/pyridoxal/pyridoxamine kinase.